The following is a 203-amino-acid chain: A-type ATP synthase subunit E (203 aa).

It belongs to the V-ATPase E subunit family. As to quaternary structure, might form a homodimer. Interacts with subunit H via residues 41-60. The A-type ATPase is composed of subunits A(3), B(3), C, D, E(1 or 2), F, H(2), I and K(x).

The protein localises to the cell membrane. Component of the A-type ATP synthase that produces ATP from ADP in the presence of a proton gradient across the membrane. The chain is A-type ATP synthase subunit E from Methanocaldococcus jannaschii (strain ATCC 43067 / DSM 2661 / JAL-1 / JCM 10045 / NBRC 100440) (Methanococcus jannaschii).